We begin with the raw amino-acid sequence, 642 residues long: Threonine--tRNA ligase (642 aa).

The TGS domain maps to 1–61; the sequence is MPVITLPDGS…SEDANLVIFT (61 aa). Residues 243–534 are catalytic; the sequence is DHRKLAKKFD…LIEHYEGSFP (292 aa). Zn(2+)-binding residues include C334, H385, and H511.

Belongs to the class-II aminoacyl-tRNA synthetase family. Homodimer. Zn(2+) serves as cofactor.

The protein localises to the cytoplasm. The enzyme catalyses tRNA(Thr) + L-threonine + ATP = L-threonyl-tRNA(Thr) + AMP + diphosphate + H(+). Catalyzes the attachment of threonine to tRNA(Thr) in a two-step reaction: L-threonine is first activated by ATP to form Thr-AMP and then transferred to the acceptor end of tRNA(Thr). Also edits incorrectly charged L-seryl-tRNA(Thr). This Cellvibrio japonicus (strain Ueda107) (Pseudomonas fluorescens subsp. cellulosa) protein is Threonine--tRNA ligase.